Reading from the N-terminus, the 487-residue chain is Bifunctional protein GlmU (487 aa).

Residues 1 to 240 (MAEVTNCAAI…PEELSGVNDR (240 aa)) are pyrophosphorylase. UDP-N-acetyl-alpha-D-glucosamine-binding positions include 12–15 (LAAG), lysine 26, glutamine 83, and 88–89 (GT). Aspartate 113 is a binding site for Mg(2+). UDP-N-acetyl-alpha-D-glucosamine is bound by residues glycine 150, glutamate 165, asparagine 180, and asparagine 238. Residue asparagine 238 coordinates Mg(2+). The tract at residues 241-261 (VQLAAAGRLLNRRMVEEAMRG) is linker. Residues 262-487 (GTTIVDPDTT…DAKANDQTTN (226 aa)) form an N-acetyltransferase region. The UDP-N-acetyl-alpha-D-glucosamine site is built by arginine 343 and lysine 361. Histidine 373 functions as the Proton acceptor in the catalytic mechanism. Residues tyrosine 376 and asparagine 387 each contribute to the UDP-N-acetyl-alpha-D-glucosamine site. Residues alanine 390, 396-397 (NY), serine 415, and alanine 433 each bind acetyl-CoA. Residues 449–487 (SGGKQRNIEGWVQKKRPGTPAAEAAGKAQDAKANDQTTN) are disordered.

This sequence in the N-terminal section; belongs to the N-acetylglucosamine-1-phosphate uridyltransferase family. It in the C-terminal section; belongs to the transferase hexapeptide repeat family. Homotrimer. It depends on Mg(2+) as a cofactor.

It localises to the cytoplasm. It carries out the reaction alpha-D-glucosamine 1-phosphate + acetyl-CoA = N-acetyl-alpha-D-glucosamine 1-phosphate + CoA + H(+). The catalysed reaction is N-acetyl-alpha-D-glucosamine 1-phosphate + UTP + H(+) = UDP-N-acetyl-alpha-D-glucosamine + diphosphate. It participates in nucleotide-sugar biosynthesis; UDP-N-acetyl-alpha-D-glucosamine biosynthesis; N-acetyl-alpha-D-glucosamine 1-phosphate from alpha-D-glucosamine 6-phosphate (route II): step 2/2. Its pathway is nucleotide-sugar biosynthesis; UDP-N-acetyl-alpha-D-glucosamine biosynthesis; UDP-N-acetyl-alpha-D-glucosamine from N-acetyl-alpha-D-glucosamine 1-phosphate: step 1/1. The protein operates within bacterial outer membrane biogenesis; LPS lipid A biosynthesis. Its function is as follows. Catalyzes the last two sequential reactions in the de novo biosynthetic pathway for UDP-N-acetylglucosamine (UDP-GlcNAc). The C-terminal domain catalyzes the transfer of acetyl group from acetyl coenzyme A to glucosamine-1-phosphate (GlcN-1-P) to produce N-acetylglucosamine-1-phosphate (GlcNAc-1-P), which is converted into UDP-GlcNAc by the transfer of uridine 5-monophosphate (from uridine 5-triphosphate), a reaction catalyzed by the N-terminal domain. The chain is Bifunctional protein GlmU from Corynebacterium aurimucosum (strain ATCC 700975 / DSM 44827 / CIP 107346 / CN-1) (Corynebacterium nigricans).